Consider the following 397-residue polypeptide: Acetate kinase (397 aa).

Asn-8 serves as a coordination point for Mg(2+). Lys-15 is an ATP binding site. Arg-89 serves as a coordination point for substrate. The Proton donor/acceptor role is filled by Asp-146. ATP is bound by residues 206–210, 280–282, and 328–332; these read HLGNG, DMR, and GVGEN. Glu-382 is a Mg(2+) binding site.

It belongs to the acetokinase family. In terms of assembly, homodimer. Requires Mg(2+) as cofactor. It depends on Mn(2+) as a cofactor.

It localises to the cytoplasm. It carries out the reaction acetate + ATP = acetyl phosphate + ADP. It functions in the pathway metabolic intermediate biosynthesis; acetyl-CoA biosynthesis; acetyl-CoA from acetate: step 1/2. In terms of biological role, catalyzes the formation of acetyl phosphate from acetate and ATP. Can also catalyze the reverse reaction. The polypeptide is Acetate kinase (Leifsonia xyli subsp. xyli (strain CTCB07)).